The following is a 196-amino-acid chain: Inosine triphosphate pyrophosphatase 1 (196 aa).

20-25 (TGNDGK) serves as a coordination point for ITP. Mg(2+) is bound at residue E48. ITP contacts are provided by residues K61, 77-78 (DT), K94, 153-156 (FGWD), K177, and 182-183 (PR).

It belongs to the HAM1 NTPase family. Homodimer. Requires Mg(2+) as cofactor. Mn(2+) is required as a cofactor.

The protein resides in the cytoplasm. The enzyme catalyses ITP + H2O = IMP + diphosphate + H(+). It catalyses the reaction dITP + H2O = dIMP + diphosphate + H(+). The catalysed reaction is XTP + H2O = XMP + diphosphate + H(+). Its function is as follows. Pyrophosphatase that hydrolyzes non-canonical purine nucleotides such as inosine triphosphate (ITP), deoxyinosine triphosphate (dITP) or xanthosine 5'-triphosphate (XTP) to their respective monophosphate derivatives. The enzyme does not distinguish between the deoxy- and ribose forms. Probably excludes non-canonical purines from RNA and DNA precursor pools, thus preventing their incorporation into RNA and DNA and avoiding chromosomal lesions. The sequence is that of Inosine triphosphate pyrophosphatase 1 from Trypanosoma cruzi (strain CL Brener).